Consider the following 314-residue polypeptide: ATP synthase gamma chain (314 aa).

Belongs to the ATPase gamma chain family. In terms of assembly, F-type ATPases have 2 components, CF(1) - the catalytic core - and CF(0) - the membrane proton channel. CF(1) has five subunits: alpha(3), beta(3), gamma(1), delta(1), epsilon(1). CF(0) has three main subunits: a, b and c.

Its subcellular location is the cell membrane. Produces ATP from ADP in the presence of a proton gradient across the membrane. The gamma chain is believed to be important in regulating ATPase activity and the flow of protons through the CF(0) complex. The protein is ATP synthase gamma chain of Limosilactobacillus reuteri (strain DSM 20016) (Lactobacillus reuteri).